Reading from the N-terminus, the 413-residue chain is Serine hydroxymethyltransferase (413 aa).

(6S)-5,6,7,8-tetrahydrofolate contacts are provided by residues L117 and 121–123 (GHL). At K226 the chain carries N6-(pyridoxal phosphate)lysine. Residues E239 and 349–351 (SPF) each bind (6S)-5,6,7,8-tetrahydrofolate.

The protein belongs to the SHMT family. As to quaternary structure, homodimer. It depends on pyridoxal 5'-phosphate as a cofactor.

The protein localises to the cytoplasm. The catalysed reaction is (6R)-5,10-methylene-5,6,7,8-tetrahydrofolate + glycine + H2O = (6S)-5,6,7,8-tetrahydrofolate + L-serine. Its pathway is one-carbon metabolism; tetrahydrofolate interconversion. It functions in the pathway amino-acid biosynthesis; glycine biosynthesis; glycine from L-serine: step 1/1. Its function is as follows. Catalyzes the reversible interconversion of serine and glycine with tetrahydrofolate (THF) serving as the one-carbon carrier. This reaction serves as the major source of one-carbon groups required for the biosynthesis of purines, thymidylate, methionine, and other important biomolecules. Also exhibits THF-independent aldolase activity toward beta-hydroxyamino acids, producing glycine and aldehydes, via a retro-aldol mechanism. This chain is Serine hydroxymethyltransferase, found in Bacillus mycoides (strain KBAB4) (Bacillus weihenstephanensis).